Here is a 312-residue protein sequence, read N- to C-terminus: 3-methyl-2-oxobutanoate hydroxymethyltransferase (312 aa).

Belongs to the PanB family.

The catalysed reaction is 3-methyl-2-oxobutanoate + (6R)-5,10-methylene-5,6,7,8-tetrahydrofolate + H2O = 2-dehydropantoate + (6S)-5,6,7,8-tetrahydrofolate. The protein operates within cofactor biosynthesis; (R)-pantothenate biosynthesis; (R)-pantoate from 3-methyl-2-oxobutanoate: step 1/2. Its function is as follows. Probable 3-methyl-2-oxobutanoate hydroxymethyltransferase required for pantothenic acid biosynthesis. Acts downstream in the pantothenic acid pathway. The sequence is that of 3-methyl-2-oxobutanoate hydroxymethyltransferase from Saccharomyces cerevisiae (strain ATCC 204508 / S288c) (Baker's yeast).